The primary structure comprises 599 residues: Aspartate--tRNA(Asp/Asn) ligase (599 aa).

Residue Glu173 participates in L-aspartate binding. The aspartate stretch occupies residues 197 to 200 (QLYK). Arg219 contributes to the L-aspartate binding site. Residues 219 to 221 (RDE) and Gln228 contribute to the ATP site. His451 provides a ligand contact to L-aspartate. An ATP-binding site is contributed by Glu484. Arg491 provides a ligand contact to L-aspartate. 536 to 539 (GLDR) contributes to the ATP binding site.

Belongs to the class-II aminoacyl-tRNA synthetase family. Type 1 subfamily. As to quaternary structure, homodimer.

The protein resides in the cytoplasm. It catalyses the reaction tRNA(Asx) + L-aspartate + ATP = L-aspartyl-tRNA(Asx) + AMP + diphosphate. Functionally, aspartyl-tRNA synthetase with relaxed tRNA specificity since it is able to aspartylate not only its cognate tRNA(Asp) but also tRNA(Asn). Reaction proceeds in two steps: L-aspartate is first activated by ATP to form Asp-AMP and then transferred to the acceptor end of tRNA(Asp/Asn). In Methylococcus capsulatus (strain ATCC 33009 / NCIMB 11132 / Bath), this protein is Aspartate--tRNA(Asp/Asn) ligase.